The sequence spans 299 residues: 5,10-dihydrophenazine-1-carboxylate 9-dimethylallyltransferase (299 aa).

Belongs to the aromatic prenyltransferase family.

The enzyme catalyses 5,10-dihydrophenazine 1-carboxylate + dimethylallyl diphosphate = 5,10-dihydro-9-dimethylallylphenazine 1-carboxylate + diphosphate. The protein operates within antibiotic biosynthesis; phenazine biosynthesis. Does not require magnesium or any other divalent metal ions for activity. In terms of biological role, involved in the biosynthesis of prenylated phenazines. Catalyzes the transfer of a dimethylallyl moiety to C-9 of 5,10-dihydrophenazine 1-carboxylate (dihydro-PCA). Specific for both dimethylallyl diphosphate and dihydro-PCA. The sequence is that of 5,10-dihydrophenazine-1-carboxylate 9-dimethylallyltransferase from Streptomyces anulatus (Streptomyces chrysomallus).